A 336-amino-acid chain; its full sequence is MSEQNTIINSEEIKENEKIESETEEPITYLDLTGQPHTSIGDSYNIPETLLDLDLTNCKITKIENINHLKNLKKLCFRQNLIEKIENIDQLKELESLDLYDNKLQVIENIKDFQSLTYLDLSFNEIRIVENLSIKDIPKIKELYLANNKITKIENLQELVPIKNLELGSNRLREIENLENLVNIETLWLGRNKITEIKGINHLSHLRILSLQSNRLTEIGVKGLVGLNCLEELYLSHNGITDIDGLQSLKQLRTLDISANKIKTLVGLNELPDLDEIWCNDNLVDSMDNIEQQVTKSIKCLYFERNPVATHVQYRRMFINMFPQLKQLDATMVKRN.

The segment covering 1-10 (MSEQNTIINS) has biased composition (low complexity). Residues 1–24 (MSEQNTIINSEEIKENEKIESETE) form a disordered region. Residues 11–21 (EEIKENEKIES) show a composition bias toward basic and acidic residues. LRR repeat units follow at residues 26 to 47 (PITYLDLTGQPHTSIGDSYNIP), 49 to 70 (TLLDLDLTNCKITKIENINHLK), 71 to 92 (NLKKLCFRQNLIEKIENIDQLK), 93 to 114 (ELESLDLYDNKLQVIENIKDFQ), 115 to 136 (SLTYLDLSFNEIRIVENLSIKD), 139 to 160 (KIKELYLANNKITKIENLQELV), 161 to 182 (PIKNLELGSNRLREIENLENLV), 183 to 204 (NIETLWLGRNKITEIKGINHLS), 205 to 225 (HLRILSLQSNRLTEIGVKGLV), 229 to 250 (CLEELYLSHNGITDIDGLQSLK), 251 to 272 (QLRTLDISANKIKTLVGLNELP), and 273 to 294 (DLDEIWCNDNLVDSMDNIEQQV). An LRRCT domain is found at 306–336 (NPVATHVQYRRMFINMFPQLKQLDATMVKRN).

The protein belongs to the SDS22 family.

The protein resides in the nucleus. In terms of biological role, regulatory subunit of protein phosphatase 1. The chain is Protein phosphatase 1 regulatory subunit pprA (pprA) from Dictyostelium discoideum (Social amoeba).